Reading from the N-terminus, the 398-residue chain is Transcription termination factor 1, mitochondrial (398 aa).

The N-terminal 57 residues, 1–57 (MQSLSLGQTSISKGLNYLTIMAPGNLWHMRNNFLFGSRCWMTRFSAENIFKSVSFRL), are a transit peptide targeting the mitochondrion. 5 interaction with DNA regions span residues 169-170 (RS), 246-250 (QSTKR), 323-330 (AEKKFNDK), 354-357 (SIST), and 383-390 (SKKRYEAK).

Belongs to the mTERF family. Monomer. Post-translationally, phosphoprotein with mostly four phosphate groups. While the DNA-binding activity is unaffected by the phosphorylation state, only the phosphorylated form of the protein is active for termination activity. Functioning seems to be regulated by phosphorylation.

It is found in the mitochondrion. Functionally, transcription termination factor. Binds to a 28 bp region within the tRNA(Leu(uur)) gene at a position immediately adjacent to and downstream of the 16S rRNA gene; this region comprises a tridecamer sequence critical for directing accurate termination. Binds DNA along the major grove and promotes DNA bending and partial unwinding. Promotes base flipping. Transcription termination activity appears to be polarized with highest specificity for transcripts initiated on the light strand. This is Transcription termination factor 1, mitochondrial (MTERF1) from Pongo abelii (Sumatran orangutan).